The primary structure comprises 473 residues: Anthocyanidin 5,3-O-glucosyltransferase (473 aa).

This sequence belongs to the UDP-glycosyltransferase family.

It functions in the pathway pigment biosynthesis; anthocyanin biosynthesis. Its function is as follows. Sequentially catalyzes two glycosylation steps at the 5-OH and 3-OH positions of anthocyanidin. Unglycosylated anthocyanidin or anthocyanidin 5-O-glucoside, but not anthocyanidin 3-O-glucoside, can be used as glucosyl acceptor. The protein is Anthocyanidin 5,3-O-glucosyltransferase (RhGT1) of Rosa hybrid cultivar.